The following is a 380-amino-acid chain: Chorismate synthase (380 aa).

Arg-47 contacts NADP(+). FMN is bound by residues 124-126 (RSS), Gly-288, 303-307 (KPTST), and Arg-329.

The protein belongs to the chorismate synthase family. As to quaternary structure, homotetramer. FMNH2 is required as a cofactor.

It catalyses the reaction 5-O-(1-carboxyvinyl)-3-phosphoshikimate = chorismate + phosphate. It participates in metabolic intermediate biosynthesis; chorismate biosynthesis; chorismate from D-erythrose 4-phosphate and phosphoenolpyruvate: step 7/7. Catalyzes the anti-1,4-elimination of the C-3 phosphate and the C-6 proR hydrogen from 5-enolpyruvylshikimate-3-phosphate (EPSP) to yield chorismate, which is the branch point compound that serves as the starting substrate for the three terminal pathways of aromatic amino acid biosynthesis. This reaction introduces a second double bond into the aromatic ring system. In Leptospira interrogans serogroup Icterohaemorrhagiae serovar copenhageni (strain Fiocruz L1-130), this protein is Chorismate synthase.